The sequence spans 1163 residues: DNA-directed RNA polymerase subunit beta 2 (1163 aa).

This sequence belongs to the RNA polymerase beta chain family. As to quaternary structure, the RNAP catalytic core consists of 2 alpha, 1 beta, 1 beta' and 1 omega subunit. When a sigma factor is associated with the core the holoenzyme is formed, which can initiate transcription.

The catalysed reaction is RNA(n) + a ribonucleoside 5'-triphosphate = RNA(n+1) + diphosphate. In terms of biological role, DNA-dependent RNA polymerase catalyzes the transcription of DNA into RNA using the four ribonucleoside triphosphates as substrates. The sequence is that of DNA-directed RNA polymerase subunit beta 2 from Nocardia farcinica (strain IFM 10152).